A 433-amino-acid chain; its full sequence is Probable glycine dehydrogenase (decarboxylating) subunit 1 (433 aa).

The protein belongs to the GcvP family. N-terminal subunit subfamily. In terms of assembly, the glycine cleavage system is composed of four proteins: P, T, L and H. In this organism, the P 'protein' is a heterodimer of two subunits.

It carries out the reaction N(6)-[(R)-lipoyl]-L-lysyl-[glycine-cleavage complex H protein] + glycine + H(+) = N(6)-[(R)-S(8)-aminomethyldihydrolipoyl]-L-lysyl-[glycine-cleavage complex H protein] + CO2. Functionally, the glycine cleavage system catalyzes the degradation of glycine. The P protein binds the alpha-amino group of glycine through its pyridoxal phosphate cofactor; CO(2) is released and the remaining methylamine moiety is then transferred to the lipoamide cofactor of the H protein. The sequence is that of Probable glycine dehydrogenase (decarboxylating) subunit 1 from Thermoplasma acidophilum (strain ATCC 25905 / DSM 1728 / JCM 9062 / NBRC 15155 / AMRC-C165).